Consider the following 284-residue polypeptide: Efem/EfeO family lipoprotein (284 aa).

A signal peptide spans 1–17; sequence MKKLTTLLLASTLLIAA. The N-palmitoyl cysteine moiety is linked to residue cysteine 18. Cysteine 18 carries S-diacylglycerol cysteine lipidation.

This sequence belongs to the EfeM/EfeO family.

The protein localises to the cell membrane. This chain is Efem/EfeO family lipoprotein, found in Staphylococcus aureus (strain USA300).